We begin with the raw amino-acid sequence, 421 residues long: Cytochrome c biogenesis protein Ccs1 (421 aa).

The next 3 helical transmembrane spans lie at L12 to I32, T71 to L91, and I157 to A177.

Belongs to the Ccs1/CcsB family. In terms of assembly, may interact with CcsA.

The protein resides in the plastid. It localises to the chloroplast thylakoid membrane. Required during biogenesis of c-type cytochromes (cytochrome c6 and cytochrome f) at the step of heme attachment. This is Cytochrome c biogenesis protein Ccs1 from Trieres chinensis (Marine centric diatom).